A 337-amino-acid polypeptide reads, in one-letter code: DNA-directed RNA polymerase subunit alpha (337 aa).

The segment at 1 to 233 is alpha N-terminal domain (alpha-NTD); the sequence is MIQKNWQELI…DQLSIFVNFE (233 aa). Positions 249 to 337 are alpha C-terminal domain (alpha-CTD); sequence FNPALLKKVD…DLAKRYEDQY (89 aa).

This sequence belongs to the RNA polymerase alpha chain family. As to quaternary structure, homodimer. The RNAP catalytic core consists of 2 alpha, 1 beta, 1 beta' and 1 omega subunit. When a sigma factor is associated with the core the holoenzyme is formed, which can initiate transcription.

It catalyses the reaction RNA(n) + a ribonucleoside 5'-triphosphate = RNA(n+1) + diphosphate. In terms of biological role, DNA-dependent RNA polymerase catalyzes the transcription of DNA into RNA using the four ribonucleoside triphosphates as substrates. The protein is DNA-directed RNA polymerase subunit alpha of Brucella suis (strain ATCC 23445 / NCTC 10510).